We begin with the raw amino-acid sequence, 519 residues long: NADH dehydrogenase (519 aa).

Residues 1 to 183 (MVLEPQIKSQ…YLNGESFTSG (183 aa)) are membrane-binding. A catalytic region spans residues 184-519 (RMTVEEILAQ…TTPAESAAAK (336 aa)). 210 to 241 (DVLVVGGGPAGASSAIYAARKGIRTGIVADRF) is an FAD binding site. Cys-337 and Cys-340 are disulfide-bonded. 349-379 (DVAVIGGGNSGVEAAIDLAGIVNHVTVLEFM) contacts NAD(+). 469–479 (TNVPGVFAAGD) serves as a coordination point for FAD.

Belongs to the class-II pyridine nucleotide-disulfide oxidoreductase family. In terms of assembly, homodimer. It depends on FAD as a cofactor.

It localises to the cell membrane. It carries out the reaction a ubiquinone + NADH + 5 H(+)(in) = a ubiquinol + NAD(+) + 4 H(+)(out). Functionally, transfer of electrons from NADH to the respiratory chain. The immediate electron acceptor for the enzyme is believed to be ubiquinone. The chain is NADH dehydrogenase (ahpF) from Ferdinandcohnia aciditolerans (strain JCM 32973 / CCTCC AB 2017280 / YN-1) (Bacillus aciditolerans).